The following is a 174-amino-acid chain: Myelin basic protein (174 aa).

A disordered region spans residues 1–86; sequence MASQKRSSFR…GRPGDDNPVV (86 aa). A2 is modified (N-acetylalanine; in forms C1, C2 and C3). Q4 is modified (deamidated glutamine; in forms C1 and C2; partial). Residue S8 is modified to Phosphoserine; in forms C2 and C3. S19 carries the phosphoserine; in form C2 modification. Basic and acidic residues predominate over residues 22–35; sequence DHARHGSPRHRDSG. A Citrulline; in forms C1, C2 and C3 modification is found at R25. Position 34 is a phosphoserine; in forms C2 and C3 (S34). Position 42 is a citrulline; in form C3 (R42). Residues 45–61 are compositionally biased toward basic and acidic residues; it reads GGDRHVPRRGFGKDIHA. A Phosphoserine; in forms C2 and C3 modification is found at S65. Q72 is subject to Deamidated glutamine; in forms C1, C2 and C3; partial. Residue S74 is modified to Phosphoserine; in form C2. Residue N91 is modified to Deamidated asparagine; in forms C1, C2 and C3; partial. At T97 the chain carries Phosphothreonine; in forms C2 and C3. Q102 carries the deamidated glutamine; in forms C1, C2 and C3; partial modification. At Q102 the chain carries Deamidated glutamine; in form C1. R106 is modified (omega-N-methylarginine; in forms C1, C2 and C3; alternate). Symmetric dimethylarginine; in forms C1, C2 and C3; alternate is present on R106. Residues S114 and S142 each carry the phosphoserine; in forms C2 and C3 modification. The interval 126-174 is disordered; it reads SGKFYEHKSAHKGHKGSYHEGQGTLSKIFKLGGSGSRPGSRSGSPVARR. Q147 carries the deamidated glutamine; in forms C1, C2 and C3; partial modification. A compositionally biased stretch (low complexity) spans 162–174; it reads RPGSRSGSPVARR. A Phosphoserine; in forms C2 and C3 modification is found at S165. Position 166 is a citrulline; in forms C2 and C3 (R166). At S169 the chain carries Phosphoserine; in forms C2 and C3.

Belongs to the myelin basic protein family. Homodimer. Several charge isomers are produced as a result of optional post-translational modifications, such as phosphorylation of serine or threonine residues, deamidation of glutamine or asparagine residues, citrullination and methylation of arginine residues. Chicken MBP contains 4 charge components denoted as C1, C2, C3 and C8. C1 lacks any phosphorylation sites, whereas C2 and C3 contain respectively 10 and 8 phosphorylation sites and arginine residues modified to citrulline. All three charge components contain deamidated glutamines and asparagine, and a methylated arginine.

It is found in the myelin membrane. Its function is as follows. Is, with PLP, the most abundant protein component of the myelin membrane in the CNS. Has a role in both the formation and stabilization of this compact multilayer arrangement of bilayers. Each splice variant and charge isomer may have a specialized function in the assembly of an optimized, biochemically functional myelin membrane. The polypeptide is Myelin basic protein (MBP) (Gallus gallus (Chicken)).